Reading from the N-terminus, the 325-residue chain is Sensor histidine kinase YxdK (325 aa).

Over 1–8 the chain is Cytoplasmic; it reads MKLFLRSH. Residues 9–29 traverse the membrane as a helical segment; it reads AVLILLFLLQGLFVFFYYWFA. Residues 30–33 are Extracellular-facing; sequence GLHS. Residues 34 to 54 form a helical membrane-spanning segment; it reads FSHLFYILGVQLLILAGYLAY. Over 55–325 the chain is Cytoplasmic; it reads RWYKDRGVYH…SVRFSFLTKM (271 aa). The region spanning 118-325 is the Histidine kinase domain; that stretch reads QWVHQVKTPL…SVRFSFLTKM (208 aa). His121 carries the post-translational modification Phosphohistidine; by autocatalysis.

It localises to the cell membrane. The catalysed reaction is ATP + protein L-histidine = ADP + protein N-phospho-L-histidine.. Probable member of the two-component regulatory system YxdK/YxdJ. May activate YxdJ in response to the antibacterial protein LL-37. The sequence is that of Sensor histidine kinase YxdK (yxdK) from Bacillus subtilis (strain 168).